Consider the following 89-residue polypeptide: Cell division topological specificity factor (89 aa).

The protein belongs to the MinE family.

Functionally, prevents the cell division inhibition by proteins MinC and MinD at internal division sites while permitting inhibition at polar sites. This ensures cell division at the proper site by restricting the formation of a division septum at the midpoint of the long axis of the cell. This is Cell division topological specificity factor from Clostridium beijerinckii (strain ATCC 51743 / NCIMB 8052) (Clostridium acetobutylicum).